Consider the following 85-residue polypeptide: Small ribosomal subunit protein eS21 (85 aa).

This sequence belongs to the eukaryotic ribosomal protein eS21 family. As to quaternary structure, component of the 40S small ribosomal subunit.

It is found in the cytoplasm. Its subcellular location is the cytosol. The protein localises to the rough endoplasmic reticulum. This chain is Small ribosomal subunit protein eS21 (rps-21), found in Pectinaria gouldii (Trumpet worm).